The primary structure comprises 288 residues: Bifunctional protein FolD (288 aa).

Residues 166–168 and isoleucine 232 contribute to the NADP(+) site; that span reads GAS.

It belongs to the tetrahydrofolate dehydrogenase/cyclohydrolase family. Homodimer.

It carries out the reaction (6R)-5,10-methylene-5,6,7,8-tetrahydrofolate + NADP(+) = (6R)-5,10-methenyltetrahydrofolate + NADPH. It catalyses the reaction (6R)-5,10-methenyltetrahydrofolate + H2O = (6R)-10-formyltetrahydrofolate + H(+). It participates in one-carbon metabolism; tetrahydrofolate interconversion. In terms of biological role, catalyzes the oxidation of 5,10-methylenetetrahydrofolate to 5,10-methenyltetrahydrofolate and then the hydrolysis of 5,10-methenyltetrahydrofolate to 10-formyltetrahydrofolate. This chain is Bifunctional protein FolD, found in Klebsiella pneumoniae (strain 342).